The following is a 231-amino-acid chain: Probable septum site-determining protein MinC (231 aa).

Positions 101 to 125 (GKEKAPRPAPTPQAPAQNTTPVTKT) are disordered. Residues 114–123 (APAQNTTPVT) show a composition bias toward low complexity.

The protein belongs to the MinC family. In terms of assembly, interacts with MinD and FtsZ.

Its function is as follows. Cell division inhibitor that blocks the formation of polar Z ring septums. Rapidly oscillates between the poles of the cell to destabilize FtsZ filaments that have formed before they mature into polar Z rings. Prevents FtsZ polymerization. The polypeptide is Probable septum site-determining protein MinC (Escherichia coli (strain ATCC 8739 / DSM 1576 / NBRC 3972 / NCIMB 8545 / WDCM 00012 / Crooks)).